The chain runs to 163 residues: Photosystem II extrinsic protein V (163 aa).

Residues 1–26 (MLKRSSWLATLLGLLTVASVSTIVYA) form the signal peptide. Cys-63, Cys-66, His-67, and His-118 together coordinate heme c.

It belongs to the cytochrome c family. PsbV subfamily. As to quaternary structure, PSII is composed of 1 copy each of membrane proteins PsbA, PsbB, PsbC, PsbD, PsbE, PsbF, PsbH, PsbI, PsbJ, PsbK, PsbL, PsbM, PsbT, PsbY, PsbZ, Psb30/Ycf12, at least 3 peripheral proteins of the oxygen-evolving complex and a large number of cofactors. It forms dimeric complexes. The extrinsic subunits in red algae are PsbO (OEC33), PsbQ', cytochrome c-550 and PsbU. It depends on heme c as a cofactor.

Its subcellular location is the plastid. It localises to the chloroplast thylakoid membrane. Functionally, one of the extrinsic, lumenal subunits of photosystem II (PSII). PSII is a light-driven water plastoquinone oxidoreductase, using light energy to abstract electrons from H(2)O, generating a proton gradient subsequently used for ATP formation. The extrinsic proteins stabilize the structure of photosystem II oxygen-evolving complex (OEC), the ion environment of oxygen evolution and protect the OEC against heat-induced inactivation. The chain is Photosystem II extrinsic protein V from Porphyra purpurea (Red seaweed).